A 277-amino-acid chain; its full sequence is Large ribosomal subunit protein uL2 (277 aa).

The tract at residues 222-277 is disordered; sequence GVAMNPVDHPHGGGEGRTSGGRHPVSPWGKSTKGKRTRSNKATDKFIMHTRHQRKK.

The protein belongs to the universal ribosomal protein uL2 family. Part of the 50S ribosomal subunit. Forms a bridge to the 30S subunit in the 70S ribosome.

Functionally, one of the primary rRNA binding proteins. Required for association of the 30S and 50S subunits to form the 70S ribosome, for tRNA binding and peptide bond formation. It has been suggested to have peptidyltransferase activity; this is somewhat controversial. Makes several contacts with the 16S rRNA in the 70S ribosome. The protein is Large ribosomal subunit protein uL2 of Bartonella quintana (strain Toulouse) (Rochalimaea quintana).